The primary structure comprises 80 residues: Large ribosomal subunit protein uL24 (80 aa).

The disordered stretch occupies residues 53–80; that stretch reads HMRPTQGQTQGSIIEREFPIHSSNVKKS.

The protein belongs to the universal ribosomal protein uL24 family. In terms of assembly, part of the 50S ribosomal subunit.

Functionally, one of two assembly initiator proteins, it binds directly to the 5'-end of the 23S rRNA, where it nucleates assembly of the 50S subunit. One of the proteins that surrounds the polypeptide exit tunnel on the outside of the subunit. This Pelodictyon phaeoclathratiforme (strain DSM 5477 / BU-1) protein is Large ribosomal subunit protein uL24.